The primary structure comprises 135 residues: Large ribosomal subunit protein uL16c (135 aa).

It belongs to the universal ribosomal protein uL16 family. As to quaternary structure, part of the 50S ribosomal subunit.

It is found in the plastid. It localises to the chloroplast. In Euglena gracilis, this protein is Large ribosomal subunit protein uL16c.